The primary structure comprises 209 residues: Translation initiation factor IF-3 (209 aa).

It belongs to the IF-3 family. In terms of assembly, monomer.

The protein resides in the cytoplasm. In terms of biological role, IF-3 binds to the 30S ribosomal subunit and shifts the equilibrium between 70S ribosomes and their 50S and 30S subunits in favor of the free subunits, thus enhancing the availability of 30S subunits on which protein synthesis initiation begins. This chain is Translation initiation factor IF-3, found in Chlorobium phaeobacteroides (strain DSM 266 / SMG 266 / 2430).